Reading from the N-terminus, the 505-residue chain is MFALRAASKADKNLLPFLGQLSRSHAAKAAKAAAAANGKIVAVIGAVVDVQFDDNLPPILNALEVDNRSPRLVLEVAQHLGENTVRTIAMDGTEGLVRGQKVLDTGYPIRIPVGAETLGRIINVIGEPIDERGPIDTDKTAAIHAEAPEFVQMSVEQEILVTGIKVVDLLAPYAKGGKIGLFGGAGVGKTVLIMELINNVAKAHGGYSVFAGVGERTREGNDLYNEMIEGGVISLKDKTSKVALVYGQMNEPPGARARVALTGLTVAEYFRDQEGQDVLLFIDNIFRFTQAGSEVSALLGRIPSAVGYQPTLATDMGSMQERITTTKKGSITSVQAIYVPADDLTDPAPATTFAHLDATTVLSRAIAELGIYPAVDPLDSTSRIMDPNIIGQEHYNVARGVQKILQDYKSLQDIIAILGMDELSEEDKLTVARARKIQRFLSQPFQVAEVFTGHAGKLVPLEQTIKGFSAILAGDYDHLPEVAFYMVGPIEEVVEKADRLAKEAA.

The N-terminal 31 residues, 1–31, are a transit peptide targeting the mitochondrion; that stretch reads MFALRAASKADKNLLPFLGQLSRSHAAKAAK. 183 to 190 provides a ligand contact to ATP; the sequence is GGAGVGKT.

The protein belongs to the ATPase alpha/beta chains family. F-type ATPases have 2 components, CF(1) - the catalytic core - and CF(0) - the membrane proton channel. CF(1) has five subunits: alpha(3), beta(3), gamma(1), delta(1), epsilon(1). CF(0) has three main subunits: a, b and c.

The protein localises to the mitochondrion. The protein resides in the mitochondrion inner membrane. It carries out the reaction ATP + H2O + 4 H(+)(in) = ADP + phosphate + 5 H(+)(out). Functionally, mitochondrial membrane ATP synthase (F(1)F(0) ATP synthase or Complex V) produces ATP from ADP in the presence of a proton gradient across the membrane which is generated by electron transport complexes of the respiratory chain. F-type ATPases consist of two structural domains, F(1) - containing the extramembraneous catalytic core, and F(0) - containing the membrane proton channel, linked together by a central stalk and a peripheral stalk. During catalysis, ATP synthesis in the catalytic domain of F(1) is coupled via a rotary mechanism of the central stalk subunits to proton translocation. Subunits alpha and beta form the catalytic core in F(1). Rotation of the central stalk against the surrounding alpha(3)beta(3) subunits leads to hydrolysis of ATP in three separate catalytic sites on the beta subunits. The sequence is that of ATP synthase subunit beta, mitochondrial from Drosophila melanogaster (Fruit fly).